The chain runs to 437 residues: Putative galacturan 1,4-alpha-galacturonidase A (437 aa).

Positions Met-1–Ala-20 are cleaved as a signal peptide. 6 N-linked (GlcNAc...) asparagine glycosylation sites follow: Asn-30, Asn-101, Asn-110, Asn-161, Asn-196, and Asn-203. Residues Ser-222–Pro-243 form a PbH1 1 repeat. Asp-236 functions as the Proton donor in the catalytic mechanism. 8 N-linked (GlcNAc...) asparagine glycosylation sites follow: Asn-244, Asn-252, Asn-278, Asn-324, Asn-352, Asn-371, Asn-382, and Asn-387. PbH1 repeat units lie at residues Ser-245–Ser-265, Val-276–Ser-302, and Val-322–Thr-343. The cysteines at positions 396 and 402 are disulfide-linked.

The protein belongs to the glycosyl hydrolase 28 family.

It localises to the secreted. The enzyme catalyses [(1-&gt;4)-alpha-D-galacturonosyl](n) + H2O = alpha-D-galacturonate + [(1-&gt;4)-alpha-D-galacturonosyl](n-1). Its function is as follows. Specific in hydrolyzing the terminal glycosidic bond of polygalacturonic acid and oligogalacturonates. In Aspergillus flavus (strain ATCC 200026 / FGSC A1120 / IAM 13836 / NRRL 3357 / JCM 12722 / SRRC 167), this protein is Putative galacturan 1,4-alpha-galacturonidase A (rgxA).